Reading from the N-terminus, the 476-residue chain is Argininosuccinate lyase (476 aa).

Belongs to the lyase 1 family. Argininosuccinate lyase subfamily.

The protein localises to the cytoplasm. The catalysed reaction is 2-(N(omega)-L-arginino)succinate = fumarate + L-arginine. It participates in amino-acid biosynthesis; L-arginine biosynthesis; L-arginine from L-ornithine and carbamoyl phosphate: step 3/3. The polypeptide is Argininosuccinate lyase (Acaryochloris marina (strain MBIC 11017)).